We begin with the raw amino-acid sequence, 451 residues long: Potassium/sodium uptake protein NtpJ (451 aa).

Helical transmembrane passes span 18–38, 46–66, 78–98, 133–153, 162–182, 192–212, 230–250, 293–313, 350–370, 380–400, and 410–430; these read IAAGFFILILFGGSLLTLPFF, HFIDALFTATSAVCVTGLTTL, FLIMTLIEIGGLGFMMIPILF, ILKFAVVIQVIGAVALSVVFI, IWFSIFHAVSSFCNAGFDLLG, VYLIMVVSALIIAGGLGFIVW, VALSVTALLLIGGFILFLITE, LILTMFLMYIGGTSGSTAGGL, ALTLFFVTLSLCVVAIMVLSV, IEYIAFEVFSAFGTVGLTMGL, and LVIISLMYIGRVGIMTVVFSL.

It belongs to the TrkH potassium transport family.

The protein localises to the cell membrane. In terms of biological role, mediates electrogenic transport of potassium as well as sodium. Acts probably as a potassium-sodium cotransporter. Major sodium reentry pathway at high pH values. The protein is Potassium/sodium uptake protein NtpJ (ntpJ) of Enterococcus hirae (strain ATCC 9790 / DSM 20160 / JCM 8729 / LMG 6399 / NBRC 3181 / NCIMB 6459 / NCDO 1258 / NCTC 12367 / WDCM 00089 / R).